We begin with the raw amino-acid sequence, 745 residues long: MSAEQPTIIYTLTDEAPLLATYAFLPIVRAFAEPAGIKIEASDISVAARILAEFPDYLTEEQRVPDNLAELGRLTQLPDTNIIKLPNISASVPQLVAAIKELQDKGYAVPDYPADPKTDQEKAIKERYARCLGSAVNPVLRQGNSDRRAPKAVKEYARKHPHSMGEWSMASRTHVAHMRHGDFYAGEKSMTLDRARNVRMELLAKSGKTIVLKPEVPLDDGDVIDSMFMSKKALCDFYEEQMQDAFETGVMFSLHVKATMMKVSHPIVFGHAVRIFYKDAFAKHQELFDDLGVNVNNGLSDLYSKIESLPASQRDEIIEDLHRCHEHRPELAMVDSARGISNFHSPSDVIVDASMPAMIRAGGKMYGADGKLKDTKAVNPESTFSRIYQEIINFCKTNGQFDPTTMGTVPNVGLMAQQAEEYGSHDKTFEIPEDGVANIVDVATGEVLLTENVEAGDIWRMCIVKDAPIRDWVKLAVTRARISGMPVLFWLDPYRPHENELIKKVKTYLKDHDTEGLDIQIMSQVRSMRYTCERLVRGLDTIAATGNILRDYLTDLFPILELGTSAKMLSVVPLMAGGGMYETGAGGSAPKHVKQLVEENHLRWDSLGEFLALGAGFEDIGIKTGNERAKLLGKTLDAAIGKLLDNDKSPSRKTGELDNRGSQFYLAMYWAQELAAQTDDQQLAEHFASLADVLTKNEDVIVRELTEVQGEPVDIGGYYAPDSDMTTAVMRPSKTFNAALEAVQG.

NADP(+) is bound by residues N87 and S89. Residues S134, N137, R141, R147, and K257 each contribute to the D-threo-isocitrate site. Position 352 (D352) interacts with Mg(2+). 2 residues coordinate D-threo-isocitrate: Y422 and R550. 2 residues coordinate Mg(2+): D551 and D555. 7 residues coordinate NADP(+): G587, S588, A589, H592, R603, D605, and R652.

It belongs to the monomeric-type IDH family. In terms of assembly, may form homotrimers. Also forms homotetramers at low salt concentration, which are dissociated into homodimers, but not into monomers, at high salt concentration (1 M). It depends on Mg(2+) as a cofactor.

It catalyses the reaction D-threo-isocitrate + NADP(+) = 2-oxoglutarate + CO2 + NADPH. Its function is as follows. Catalyzes the oxidative decarboxylation of isocitrate to 2-oxoglutarate and carbon dioxide with the concomitant reduction of NADP(+). Cannot use NAD(+). The chain is Isocitrate dehydrogenase [NADP] 2 from Mycobacterium tuberculosis (strain ATCC 25618 / H37Rv).